The following is a 256-amino-acid chain: Acetyl-coenzyme A carboxylase carboxyl transferase subunit alpha (256 aa).

The region spanning 1-236 (MTDVSRVLKE…KANLIEQITS (236 aa)) is the CoA carboxyltransferase C-terminal domain.

Belongs to the AccA family. As to quaternary structure, acetyl-CoA carboxylase is a heterohexamer composed of biotin carboxyl carrier protein (AccB), biotin carboxylase (AccC) and two subunits each of ACCase subunit alpha (AccA) and ACCase subunit beta (AccD).

It is found in the cytoplasm. It catalyses the reaction N(6)-carboxybiotinyl-L-lysyl-[protein] + acetyl-CoA = N(6)-biotinyl-L-lysyl-[protein] + malonyl-CoA. It participates in lipid metabolism; malonyl-CoA biosynthesis; malonyl-CoA from acetyl-CoA: step 1/1. Functionally, component of the acetyl coenzyme A carboxylase (ACC) complex. First, biotin carboxylase catalyzes the carboxylation of biotin on its carrier protein (BCCP) and then the CO(2) group is transferred by the carboxyltransferase to acetyl-CoA to form malonyl-CoA. In Streptococcus pyogenes serotype M12 (strain MGAS2096), this protein is Acetyl-coenzyme A carboxylase carboxyl transferase subunit alpha.